A 183-amino-acid polypeptide reads, in one-letter code: Threonylcarbamoyl-AMP synthase (183 aa).

Positions 1 to 183 (MNREQIADAL…LRTNQLFRQG (183 aa)) constitute a YrdC-like domain.

It belongs to the SUA5 family. TsaC subfamily.

The protein resides in the cytoplasm. The catalysed reaction is L-threonine + hydrogencarbonate + ATP = L-threonylcarbamoyladenylate + diphosphate + H2O. Its function is as follows. Required for the formation of a threonylcarbamoyl group on adenosine at position 37 (t(6)A37) in tRNAs that read codons beginning with adenine. Catalyzes the conversion of L-threonine, HCO(3)(-)/CO(2) and ATP to give threonylcarbamoyl-AMP (TC-AMP) as the acyladenylate intermediate, with the release of diphosphate. The sequence is that of Threonylcarbamoyl-AMP synthase from Haemophilus influenzae (strain ATCC 51907 / DSM 11121 / KW20 / Rd).